Consider the following 165-residue polypeptide: Phosphopantetheine adenylyltransferase (165 aa).

Thr9 provides a ligand contact to substrate. ATP is bound by residues 9–10 and His17; that span reads TF. Residues Lys41, Leu73, and Arg87 each contribute to the substrate site. ATP is bound by residues 88-90, Glu98, and 123-129; these read GLR and YQFISGT.

Belongs to the bacterial CoaD family. As to quaternary structure, homohexamer. Mg(2+) serves as cofactor.

It is found in the cytoplasm. The catalysed reaction is (R)-4'-phosphopantetheine + ATP + H(+) = 3'-dephospho-CoA + diphosphate. The protein operates within cofactor biosynthesis; coenzyme A biosynthesis; CoA from (R)-pantothenate: step 4/5. Its function is as follows. Reversibly transfers an adenylyl group from ATP to 4'-phosphopantetheine, yielding dephospho-CoA (dPCoA) and pyrophosphate. The sequence is that of Phosphopantetheine adenylyltransferase from Burkholderia vietnamiensis (strain G4 / LMG 22486) (Burkholderia cepacia (strain R1808)).